The primary structure comprises 338 residues: Lipoate-protein ligase A (338 aa).

The 188-residue stretch at 29 to 216 (PATQRVLFLW…AFFAHYGEHV (188 aa)) folds into the BPL/LPL catalytic domain. ATP-binding positions include arginine 71, 76–79 (GAVF), and lysine 134. Lysine 134 serves as a coordination point for (R)-lipoate.

This sequence belongs to the LplA family. In terms of assembly, monomer.

Its subcellular location is the cytoplasm. The catalysed reaction is L-lysyl-[lipoyl-carrier protein] + (R)-lipoate + ATP = N(6)-[(R)-lipoyl]-L-lysyl-[lipoyl-carrier protein] + AMP + diphosphate + H(+). It participates in protein modification; protein lipoylation via exogenous pathway; protein N(6)-(lipoyl)lysine from lipoate: step 1/2. Its pathway is protein modification; protein lipoylation via exogenous pathway; protein N(6)-(lipoyl)lysine from lipoate: step 2/2. Its function is as follows. Catalyzes both the ATP-dependent activation of exogenously supplied lipoate to lipoyl-AMP and the transfer of the activated lipoyl onto the lipoyl domains of lipoate-dependent enzymes. The polypeptide is Lipoate-protein ligase A (Escherichia coli O17:K52:H18 (strain UMN026 / ExPEC)).